The primary structure comprises 1141 residues: Serine-aspartate repeat-containing protein E (1141 aa).

A signal peptide spans M1 to A52. Residues F23 to S34 carry the YSIRK-G/S signaling motif motif. A ligand binding A region region spans residues A53–K601. The interval E54–E225 is disordered. The span at A61–V75 shows a compositional bias: basic and acidic residues. Low complexity predominate over residues E77–N90. Residues I92–T109 are compositionally biased toward basic and acidic residues. Low complexity predominate over residues K110 to T126. Residues N130–T145 show a composition bias toward basic and acidic residues. Residues P158–T207 show a composition bias toward polar residues. Residues S216 to E225 show a composition bias toward basic and acidic residues. CNA-B domains are found at residues L602–P714, K715–P824, and K825–T935. The disordered stretch occupies residues V899–A1117. Composition is skewed to acidic residues over residues T903–E913 and Y930–S1080. An LPXTG sorting signal motif is present at residues L1104–G1108. T1107 is subject to Pentaglycyl murein peptidoglycan amidated threonine. The propeptide at G1108–K1141 is removed by sortase.

The protein belongs to the serine-aspartate repeat-containing protein (SDr) family. In terms of assembly, interacts with host complement factor H/CFAH (via C-terminus). Interacts with host complement regulator C4BPA.

The protein localises to the secreted. Its subcellular location is the cell wall. Cell surface-associated calcium-binding protein which plays an important role in adhesion and pathogenesis. Contributes to the resistance to killing by innate immune components in blood and thus attenuates bacterial clearance by interacting with host complement factor H/CFAH and modulating its activity. Also inhibits bacterial opsonization and killing by interacting with host complement regulator C4BPA and thus inhibiting classical complement pathway activation. The chain is Serine-aspartate repeat-containing protein E (sdrE) from Staphylococcus aureus (strain MSSA476).